Here is a 539-residue protein sequence, read N- to C-terminus: Fucosyltransferase 2 (539 aa).

Over 1-5 (MRITE) the chain is Cytoplasmic. A helical; Signal-anchor for type II membrane protein transmembrane segment spans residues 6–26 (ILALFMVLVPVSLVIVAMFGY). Topologically, residues 27–539 (DQGNGFVQAS…SWGLKLVDNF (513 aa)) are lumenal. N-linked (GlcNAc...) asparagine glycosylation is found at asparagine 44, asparagine 231, and asparagine 482.

Belongs to the glycosyltransferase 37 family. In terms of tissue distribution, expressed in roots, stems, leaves, flowers, siliques and seedlings.

Its subcellular location is the golgi apparatus. It localises to the golgi stack membrane. Its pathway is protein modification; protein glycosylation. May be involved in cell wall biosynthesis. May act as a fucosyltransferase. The chain is Fucosyltransferase 2 (FUT2) from Arabidopsis thaliana (Mouse-ear cress).